A 331-amino-acid polypeptide reads, in one-letter code: Phosphate acyltransferase (331 aa).

The protein belongs to the PlsX family. Homodimer. Probably interacts with PlsY.

It is found in the cytoplasm. The enzyme catalyses a fatty acyl-[ACP] + phosphate = an acyl phosphate + holo-[ACP]. The protein operates within lipid metabolism; phospholipid metabolism. Functionally, catalyzes the reversible formation of acyl-phosphate (acyl-PO(4)) from acyl-[acyl-carrier-protein] (acyl-ACP). This enzyme utilizes acyl-ACP as fatty acyl donor, but not acyl-CoA. This is Phosphate acyltransferase from Ureaplasma urealyticum serovar 10 (strain ATCC 33699 / Western).